The chain runs to 356 residues: tRNA N6-adenosine threonylcarbamoyltransferase (356 aa).

Residues histidine 116 and histidine 120 each contribute to the Fe cation site. Residues 139–143 (IVSGG), aspartate 174, glycine 187, aspartate 191, and asparagine 281 contribute to the substrate site. Aspartate 309 provides a ligand contact to Fe cation.

The protein belongs to the KAE1 / TsaD family. Fe(2+) is required as a cofactor.

The protein localises to the cytoplasm. The enzyme catalyses L-threonylcarbamoyladenylate + adenosine(37) in tRNA = N(6)-L-threonylcarbamoyladenosine(37) in tRNA + AMP + H(+). In terms of biological role, required for the formation of a threonylcarbamoyl group on adenosine at position 37 (t(6)A37) in tRNAs that read codons beginning with adenine. Is involved in the transfer of the threonylcarbamoyl moiety of threonylcarbamoyl-AMP (TC-AMP) to the N6 group of A37, together with TsaE and TsaB. TsaD likely plays a direct catalytic role in this reaction. This is tRNA N6-adenosine threonylcarbamoyltransferase from Frankia alni (strain DSM 45986 / CECT 9034 / ACN14a).